We begin with the raw amino-acid sequence, 1055 residues long: Elongation factor 3 (1055 aa).

Position 45 (Val-45) interacts with ADP. HEAT repeat units lie at residues 45-86, 96-133, 135-172, 175-213, 217-255, 257-290, and 295-337; these read VEFF…NGAA, SAEN…SMNP, ASFV…SAPY, GEAM…LVEN, EKFV…APTI, LIAP…LVDS, and RPFL…VPVE. 2 ABC transporter domains span residues 447 to 659 and 687 to 1004; these read CNIE…SYYQ and LKMR…KKAG. ADP is bound by residues Asn-723, Glu-933, Asn-936, and His-962. 2 disordered regions span residues 987-1006 and 1024-1055; these read HNWV…AGDD and EKKL…DEEL. A compositionally biased stretch (basic residues) spans 1033-1044; that stretch reads RKAKKDRMARRK.

This sequence belongs to the ABC transporter superfamily. ABCF family. EF3 subfamily. In terms of assembly, associates with ribosomes.

The protein resides in the cytoplasm. The protein localises to the cytosol. It catalyses the reaction ATP + H2O = ADP + phosphate + H(+). The protein operates within protein biosynthesis; polypeptide chain elongation. Ribosome-dependent ATPase that functions in cytoplasmic translation elongation. Required for the ATP-dependent release of deacylated tRNA from the ribosomal E-site during protein biosynthesis. Stimulates the eEF1A-dependent binding of aminoacyl-tRNA to the ribosomal A-site, which has reduced affinity for tRNA as long as the E-site is occupied. Assists translation termination by stimulating the release of nascent protein from the ribosome by release factors. Appears to target calcium-channel protein CCH1 to the plasma membrane. The polypeptide is Elongation factor 3 (Cryptococcus neoformans var. neoformans serotype D (strain JEC21 / ATCC MYA-565) (Filobasidiella neoformans)).